Consider the following 258-residue polypeptide: NAD kinase (258 aa).

The Proton acceptor role is filled by aspartate 51. NAD(+)-binding positions include 51–52 (DG), lysine 56, 119–120 (ND), lysine 130, aspartate 149, 160–165 (TAYSLS), and alanine 184.

The protein belongs to the NAD kinase family. A divalent metal cation serves as cofactor.

The protein resides in the cytoplasm. The catalysed reaction is NAD(+) + ATP = ADP + NADP(+) + H(+). Functionally, involved in the regulation of the intracellular balance of NAD and NADP, and is a key enzyme in the biosynthesis of NADP. Catalyzes specifically the phosphorylation on 2'-hydroxyl of the adenosine moiety of NAD to yield NADP. This Thermotoga petrophila (strain ATCC BAA-488 / DSM 13995 / JCM 10881 / RKU-1) protein is NAD kinase.